We begin with the raw amino-acid sequence, 132 residues long: NADPH-dependent 7-cyano-7-deazaguanine reductase (132 aa).

Catalysis depends on Cys48, which acts as the Thioimide intermediate. The Proton donor role is filled by Asp55. Residues Leu70–Leu72 and Met89–Glu90 contribute to the substrate site.

The protein belongs to the GTP cyclohydrolase I family. QueF type 1 subfamily.

It localises to the cytoplasm. The catalysed reaction is 7-aminomethyl-7-carbaguanine + 2 NADP(+) = 7-cyano-7-deazaguanine + 2 NADPH + 3 H(+). It functions in the pathway tRNA modification; tRNA-queuosine biosynthesis. Functionally, catalyzes the NADPH-dependent reduction of 7-cyano-7-deazaguanine (preQ0) to 7-aminomethyl-7-deazaguanine (preQ1). The polypeptide is NADPH-dependent 7-cyano-7-deazaguanine reductase (Elusimicrobium minutum (strain Pei191)).